Here is a 305-residue protein sequence, read N- to C-terminus: tRNA dimethylallyltransferase (305 aa).

Position 8–15 (8–15 (GPTASGKT)) interacts with ATP. 10–15 (TASGKT) contributes to the substrate binding site. Residues 33–36 (DSQQ) form an interaction with substrate tRNA region.

Belongs to the IPP transferase family. In terms of assembly, monomer. Mg(2+) serves as cofactor.

The catalysed reaction is adenosine(37) in tRNA + dimethylallyl diphosphate = N(6)-dimethylallyladenosine(37) in tRNA + diphosphate. Catalyzes the transfer of a dimethylallyl group onto the adenine at position 37 in tRNAs that read codons beginning with uridine, leading to the formation of N6-(dimethylallyl)adenosine (i(6)A). The protein is tRNA dimethylallyltransferase of Anaeromyxobacter dehalogenans (strain 2CP-1 / ATCC BAA-258).